Reading from the N-terminus, the 33-residue chain is Brevinin-2Rh (33 aa).

Cys27 and Cys33 are disulfide-bonded.

In terms of tissue distribution, expressed by the skin glands.

It localises to the secreted. Antimicrobial peptide. The chain is Brevinin-2Rh from Pelophylax ridibundus (Marsh frog).